The following is a 560-amino-acid chain: 2-succinyl-5-enolpyruvyl-6-hydroxy-3-cyclohexene-1-carboxylate synthase (560 aa).

This sequence belongs to the TPP enzyme family. MenD subfamily. In terms of assembly, homodimer. Mg(2+) is required as a cofactor. Mn(2+) serves as cofactor. It depends on thiamine diphosphate as a cofactor.

The enzyme catalyses isochorismate + 2-oxoglutarate + H(+) = 5-enolpyruvoyl-6-hydroxy-2-succinyl-cyclohex-3-ene-1-carboxylate + CO2. It participates in quinol/quinone metabolism; 1,4-dihydroxy-2-naphthoate biosynthesis; 1,4-dihydroxy-2-naphthoate from chorismate: step 2/7. The protein operates within quinol/quinone metabolism; menaquinone biosynthesis. In terms of biological role, catalyzes the thiamine diphosphate-dependent decarboxylation of 2-oxoglutarate and the subsequent addition of the resulting succinic semialdehyde-thiamine pyrophosphate anion to isochorismate to yield 2-succinyl-5-enolpyruvyl-6-hydroxy-3-cyclohexene-1-carboxylate (SEPHCHC). This is 2-succinyl-5-enolpyruvyl-6-hydroxy-3-cyclohexene-1-carboxylate synthase from Staphylococcus saprophyticus subsp. saprophyticus (strain ATCC 15305 / DSM 20229 / NCIMB 8711 / NCTC 7292 / S-41).